The chain runs to 344 residues: Gibberellin receptor GID1C (344 aa).

Alanine 2 bears the N-acetylalanine mark. An Involved in the stabilization of the negatively charged intermediate by the formation of the oxyanion hole motif is present at residues 111 to 113 (HGG). Gibberellin A4 contacts are provided by residues 113–114 (GS), tyrosine 125, and serine 189. Residues serine 114, tyrosine 125, serine 189, and phenylalanine 236 each coordinate gibberellin A3. The active site involves serine 189. Residue aspartate 287 is part of the active site. Gibberellin A4 is bound at residue glycine 318. Glycine 318 is a gibberellin A3 binding site.

It belongs to the 'GDXG' lipolytic enzyme family. As to quaternary structure, interacts with the DELLA proteins GAI, RGA, RGL1, RGL2 and RGL3 in a GA-dependent manner. As to expression, widely expressed.

The protein localises to the nucleus. Functions as a soluble gibberellin (GA) receptor. GA is an essential hormone that regulates growth and development in plants. Binds with high affinity the biologically active gibberellin GA4, but has no affinity for the biologically inactive GAs. In response to GA, interacts with specific DELLA proteins, known as repressors of GA-induced growth, and targets them for degradation via proteasome. Seems to be required for GA signaling that controls root growth, seed germination and stem elongation. Partially redundant with GID1A and GID1B. This chain is Gibberellin receptor GID1C (GID1C), found in Arabidopsis thaliana (Mouse-ear cress).